Reading from the N-terminus, the 391-residue chain is Thyroid hormone receptor alpha-B (391 aa).

Positions 1–32 (MAQWPEKEEEEQPMFGEEYTGYIPSYLEKDEP) are modulating. 2 consecutive NR C4-type zinc fingers follow at residues 33–53 (CVVC…CEGC) and 71–95 (CKYD…FKKC). The nuclear receptor DNA-binding region spans 33 to 100 (CVVCGDKATG…RFKKCIAVGM (68 aa)). Residues 143–388 (AEWELIRMVT…PPLFLEVFED (246 aa)) enclose the NR LBD domain.

The protein belongs to the nuclear hormone receptor family. NR1 subfamily.

It is found in the nucleus. Its function is as follows. High affinity receptor for triiodothyronine. The protein is Thyroid hormone receptor alpha-B (thra2) of Paralichthys olivaceus (Bastard halibut).